A 386-amino-acid polypeptide reads, in one-letter code: Chaperone protein DnaJ (386 aa).

Positions 4–68 constitute a J domain; the sequence is NFYDVLGVSR…QKRQQYDQLG (65 aa). 2 stretches are compositionally biased toward basic and acidic residues: residues 22–35 and 43–79; these read KAYR…HPDV and ERFK…DKRG. The segment at 22–132 is disordered; sequence KAYRKQAAEH…GGNRPRQGQD (111 aa). 2 stretches are compositionally biased toward gly residues: residues 80–104 and 113–125; these read ATGG…GAGG and FGGG…GGGN. Residues 147–229 form a CR-type zinc finger; the sequence is GATKEVTLTR…CGGDGVVREE (83 aa). Zn(2+) is bound by residues cysteine 160, cysteine 163, cysteine 177, cysteine 180, cysteine 203, cysteine 206, cysteine 217, and cysteine 220. CXXCXGXG motif repeat units lie at residues 160-167, 177-184, 203-210, and 217-224; these read CDTCDGAG, CSQCNGRG, CPRCEGSG, and CADCGGDG.

Belongs to the DnaJ family. In terms of assembly, homodimer. Zn(2+) serves as cofactor.

The protein resides in the cytoplasm. Functionally, participates actively in the response to hyperosmotic and heat shock by preventing the aggregation of stress-denatured proteins and by disaggregating proteins, also in an autonomous, DnaK-independent fashion. Unfolded proteins bind initially to DnaJ; upon interaction with the DnaJ-bound protein, DnaK hydrolyzes its bound ATP, resulting in the formation of a stable complex. GrpE releases ADP from DnaK; ATP binding to DnaK triggers the release of the substrate protein, thus completing the reaction cycle. Several rounds of ATP-dependent interactions between DnaJ, DnaK and GrpE are required for fully efficient folding. Also involved, together with DnaK and GrpE, in the DNA replication of plasmids through activation of initiation proteins. The chain is Chaperone protein DnaJ from Halorubrum lacusprofundi (strain ATCC 49239 / DSM 5036 / JCM 8891 / ACAM 34).